A 340-amino-acid chain; its full sequence is Holliday junction branch migration complex subunit RuvB (340 aa).

The interval 1-181 (MDRIVEIEKA…FGMQFRLNFY (181 aa)) is large ATPase domain (RuvB-L). ATP contacts are provided by residues leucine 20, arginine 21, glycine 62, lysine 65, threonine 66, threonine 67, 128 to 130 (EDF), arginine 171, tyrosine 181, and arginine 218. Residue threonine 66 coordinates Mg(2+). The interval 182-252 (TSDELAKIVQ…RAKSSLDALG (71 aa)) is small ATPAse domain (RuvB-S). Positions 255–340 (DLGFDEMDLK…TQKGLFDEDQ (86 aa)) are head domain (RuvB-H). Residues arginine 309 and arginine 314 each contribute to the DNA site.

This sequence belongs to the RuvB family. As to quaternary structure, homohexamer. Forms an RuvA(8)-RuvB(12)-Holliday junction (HJ) complex. HJ DNA is sandwiched between 2 RuvA tetramers; dsDNA enters through RuvA and exits via RuvB. An RuvB hexamer assembles on each DNA strand where it exits the tetramer. Each RuvB hexamer is contacted by two RuvA subunits (via domain III) on 2 adjacent RuvB subunits; this complex drives branch migration. In the full resolvosome a probable DNA-RuvA(4)-RuvB(12)-RuvC(2) complex forms which resolves the HJ.

The protein resides in the cytoplasm. It carries out the reaction ATP + H2O = ADP + phosphate + H(+). Functionally, the RuvA-RuvB-RuvC complex processes Holliday junction (HJ) DNA during genetic recombination and DNA repair, while the RuvA-RuvB complex plays an important role in the rescue of blocked DNA replication forks via replication fork reversal (RFR). RuvA specifically binds to HJ cruciform DNA, conferring on it an open structure. The RuvB hexamer acts as an ATP-dependent pump, pulling dsDNA into and through the RuvAB complex. RuvB forms 2 homohexamers on either side of HJ DNA bound by 1 or 2 RuvA tetramers; 4 subunits per hexamer contact DNA at a time. Coordinated motions by a converter formed by DNA-disengaged RuvB subunits stimulates ATP hydrolysis and nucleotide exchange. Immobilization of the converter enables RuvB to convert the ATP-contained energy into a lever motion, pulling 2 nucleotides of DNA out of the RuvA tetramer per ATP hydrolyzed, thus driving DNA branch migration. The RuvB motors rotate together with the DNA substrate, which together with the progressing nucleotide cycle form the mechanistic basis for DNA recombination by continuous HJ branch migration. Branch migration allows RuvC to scan DNA until it finds its consensus sequence, where it cleaves and resolves cruciform DNA. In Campylobacter hominis (strain ATCC BAA-381 / DSM 21671 / CCUG 45161 / LMG 19568 / NCTC 13146 / CH001A), this protein is Holliday junction branch migration complex subunit RuvB.